Consider the following 141-residue polypeptide: Small ribosomal subunit protein bS6 (141 aa).

The segment at 96-141 (VTGPSAMMKTVEREEFRKASQAGNQTTAPAASPADHAAAPASADRS) is disordered. Over residues 123 to 141 (APAASPADHAAAPASADRS) the composition is skewed to low complexity.

The protein belongs to the bacterial ribosomal protein bS6 family.

Binds together with bS18 to 16S ribosomal RNA. The sequence is that of Small ribosomal subunit protein bS6 from Verminephrobacter eiseniae (strain EF01-2).